Consider the following 333-residue polypeptide: MGPAELVQKISINAESPRGGERNDCGAGAERGPAGGWRQKCAAYVLALRPWSFSASLTPVALGSALAYRAEGALDPRLLVGSAVAVLAVHGAGNLVNTYYDFSKGIDHKKSDDRTLVDQILEPQDVVRFGVFLYTVGCICAAGLYAVSTLKLEHLALVYFGGLSSSFLYTGGIGFKYVALGDVVILITFGPLAVMFAHAVQVGYLSVSPLLYAVPLALSTEAILHSNNTRDMESDQQAGIVTLAIIIGPAFSYVLYTVLLFLPYLIFCVLATRYTISMALPLLTIPMAFSLERQFRSQNFNKIPQRTAKLNLLLGLFYVFGIMLAPAGALPKL.

Residues N13–P33 are disordered. The next 8 helical transmembrane spans lie at L78 to T98, F129 to T149, L155 to F175, Y177 to A197, A199 to S219, I240 to L260, L265 to I285, and L310 to L330.

This sequence belongs to the UbiA prenyltransferase family.

Its subcellular location is the endoplasmic reticulum membrane. The protein resides in the golgi apparatus membrane. The protein localises to the mitochondrion membrane. It catalyses the reaction menadiol + (2E,6E,10E)-geranylgeranyl diphosphate = menaquinol-4 + diphosphate. The catalysed reaction is all-trans-decaprenyl diphosphate + 4-hydroxybenzoate = 4-hydroxy-3-(all-trans-decaprenyl)benzoate + diphosphate. It functions in the pathway quinol/quinone metabolism; menaquinone biosynthesis. It participates in cofactor biosynthesis; ubiquinone biosynthesis. In terms of biological role, prenyltransferase that mediates the formation of menaquinone-4 (MK-4) and coenzyme Q10. MK-4 is a vitamin K2 isoform required for endothelial cell development. Mediates the conversion of phylloquinone (PK) into MK-4, probably by cleaving the side chain of phylloquinone (PK) to release 2-methyl-1,4-naphthoquinone (menadione; K3) and then prenylating it with geranylgeranyl pyrophosphate (GGPP) to form MK-4. Also plays a role in cardiovascular development independently of MK-4 biosynthesis, by acting as a coenzyme Q10 biosynthetic enzyme: coenzyme Q10, also named ubiquinone, plays an important antioxidant role in the cardiovascular system. Mediates biosynthesis of coenzyme Q10 in the Golgi membrane, leading to protect cardiovascular tissues from NOS3/eNOS-dependent oxidative stress. This Gallus gallus (Chicken) protein is UbiA prenyltransferase domain-containing protein 1 (UBIAD1).